The chain runs to 624 residues: E3 ubiquitin-protein ligase RLIM (624 aa).

Methionine 1 is subject to N-acetylmethionine. The segment covering 1–11 (MENSDSNDKGS) has biased composition (basic and acidic residues). 5 disordered regions span residues 1 to 25 (MENS…QMDR), 72 to 251 (KEGP…SQTF), 257 to 276 (NETE…QQIS), 291 to 363 (TRNA…RGGF), and 424 to 522 (SDSE…TFDE). Over residues 104-132 (SVRQTGNTTRSGQRGNQSWRAVSRTNPNS) the composition is skewed to polar residues. A compositionally biased stretch (low complexity) spans 142–153 (NVNRNNGSQNSE). A Phosphoserine modification is found at serine 164. Residues 165 to 188 (GENVENNSQRQVENPRSESTSARP) are compositionally biased toward polar residues. Phosphoserine is present on residues serine 195, serine 228, serine 230, and serine 276. Basic and acidic residues predominate over residues 214–229 (RSPDHRRTRARAERSR). A compositionally biased stretch (polar residues) spans 291 to 315 (TRNASQGAGSSDTAASGESTGSGQR). Residues 329–339 (RPGEYRQRDSI) show a composition bias toward basic and acidic residues. Over residues 340 to 356 (ASRTRSRSQTPNNTVTY) the composition is skewed to polar residues. A compositionally biased stretch (gly residues) spans 445–454 (GRGGSGGGSS). Residues 455 to 507 (SGSSSSSSSSSSSSSSSSSSSSPSSSSGGESSETSSDLFEGSNEGSSSSGSSG) show a composition bias toward low complexity. The RING-type zinc-finger motif lies at 570–611 (CSVCITEYTEGNKLRKLPCSHEYHVHCIDRWLSENSTCPICR). Positions 621–624 (ESVV) match the PDZ-binding motif.

Belongs to the RNF12 family. Interacts with LIM/homeobox factors such as LHX3. Interacts with LDB1, LDB2 and SIN3A. Interacts with LIMK1. Interacts (via N-terminus) with TERF1. Interacts (via C-terminus) with ESR1. Expressed in many tissues.

It is found in the nucleus. It catalyses the reaction S-ubiquitinyl-[E2 ubiquitin-conjugating enzyme]-L-cysteine + [acceptor protein]-L-lysine = [E2 ubiquitin-conjugating enzyme]-L-cysteine + N(6)-ubiquitinyl-[acceptor protein]-L-lysine.. Its pathway is protein modification; protein ubiquitination. E3 ubiquitin-protein ligase. Acts as a negative coregulator for LIM homeodomain transcription factors by mediating the ubiquitination and subsequent degradation of LIM cofactors LDB1 and LDB2 and by mediating the recruitment the SIN3a/histone deacetylase corepressor complex. Ubiquitination and degradation of LIM cofactors LDB1 and LDB2 allows DNA-bound LIM homeodomain transcription factors to interact with other protein partners such as RLIM. Plays a role in telomere length-mediated growth suppression by mediating the ubiquitination and degradation of TERF1. By targeting ZFP42 for degradation, acts as an activator of random inactivation of X chromosome in the embryo, a stochastic process in which one X chromosome is inactivated to minimize sex-related dosage differences of X-encoded genes in somatic cells of female placental mammals. This Homo sapiens (Human) protein is E3 ubiquitin-protein ligase RLIM (RLIM).